Here is a 269-residue protein sequence, read N- to C-terminus: 4-hydroxy-tetrahydrodipicolinate reductase (269 aa).

Residues 11-16 and E37 contribute to the NAD(+) site; that span reads GASGRM. R38 serves as a coordination point for NADP(+). Residues 101 to 103 and 125 to 128 each bind NAD(+); these read GTT and AGNM. Residue H158 is the Proton donor/acceptor of the active site. H159 serves as a coordination point for (S)-2,3,4,5-tetrahydrodipicolinate. Residue K162 is the Proton donor of the active site. 168-169 is a (S)-2,3,4,5-tetrahydrodipicolinate binding site; the sequence is GT.

It belongs to the DapB family.

It localises to the cytoplasm. It carries out the reaction (S)-2,3,4,5-tetrahydrodipicolinate + NAD(+) + H2O = (2S,4S)-4-hydroxy-2,3,4,5-tetrahydrodipicolinate + NADH + H(+). The enzyme catalyses (S)-2,3,4,5-tetrahydrodipicolinate + NADP(+) + H2O = (2S,4S)-4-hydroxy-2,3,4,5-tetrahydrodipicolinate + NADPH + H(+). It functions in the pathway amino-acid biosynthesis; L-lysine biosynthesis via DAP pathway; (S)-tetrahydrodipicolinate from L-aspartate: step 4/4. Catalyzes the conversion of 4-hydroxy-tetrahydrodipicolinate (HTPA) to tetrahydrodipicolinate. The protein is 4-hydroxy-tetrahydrodipicolinate reductase of Cereibacter sphaeroides (strain ATCC 17029 / ATH 2.4.9) (Rhodobacter sphaeroides).